Here is a 321-residue protein sequence, read N- to C-terminus: Lipoyl synthase (321 aa).

[4Fe-4S] cluster-binding residues include Cys68, Cys73, Cys79, Cys94, Cys98, Cys101, and Ser308. The Radical SAM core domain occupies 80–297 (FNHGTATFMI…KEIALELGFT (218 aa)).

The protein belongs to the radical SAM superfamily. Lipoyl synthase family. Requires [4Fe-4S] cluster as cofactor.

Its subcellular location is the cytoplasm. It carries out the reaction [[Fe-S] cluster scaffold protein carrying a second [4Fe-4S](2+) cluster] + N(6)-octanoyl-L-lysyl-[protein] + 2 oxidized [2Fe-2S]-[ferredoxin] + 2 S-adenosyl-L-methionine + 4 H(+) = [[Fe-S] cluster scaffold protein] + N(6)-[(R)-dihydrolipoyl]-L-lysyl-[protein] + 4 Fe(3+) + 2 hydrogen sulfide + 2 5'-deoxyadenosine + 2 L-methionine + 2 reduced [2Fe-2S]-[ferredoxin]. Its pathway is protein modification; protein lipoylation via endogenous pathway; protein N(6)-(lipoyl)lysine from octanoyl-[acyl-carrier-protein]: step 2/2. Its function is as follows. Catalyzes the radical-mediated insertion of two sulfur atoms into the C-6 and C-8 positions of the octanoyl moiety bound to the lipoyl domains of lipoate-dependent enzymes, thereby converting the octanoylated domains into lipoylated derivatives. In Aliivibrio fischeri (strain ATCC 700601 / ES114) (Vibrio fischeri), this protein is Lipoyl synthase.